Reading from the N-terminus, the 505-residue chain is Activin receptor type-1B (505 aa).

The N-terminal stretch at 1–23 (MAESAGASSFFPLVVLLLAGSGG) is a signal peptide. Residues 24 to 126 (SGPRGVQALL…EHPSMWGPVE (103 aa)) lie on the Extracellular side of the membrane. Asn43 is a glycosylation site (N-linked (GlcNAc...) asparagine). A helical membrane pass occupies residues 127-149 (LVGIIAGPVFLLFLIIIIVFLVI). Topologically, residues 150–505 (NYHQRVYHNR…QLSVQEDVKI (356 aa)) are cytoplasmic. The GS domain occupies 177 to 206 (KTLQDLVYDLSTSGSGSGLPLFVQRTVART). The 291-residue stretch at 207–497 (IVLQEIIGKG…LRIKKTLSQL (291 aa)) folds into the Protein kinase domain. Residues 213-221 (IGKGRFGEV) and Lys234 each bind ATP. Asp335 (proton acceptor) is an active-site residue. Tyr380 carries the phosphotyrosine modification.

Belongs to the protein kinase superfamily. TKL Ser/Thr protein kinase family. TGFB receptor subfamily. Forms an activin receptor complex with activin receptor type-2 (ACVR2A or ACVR2B). Part of a complex consisting of MAGI2/ARIP1, ACVR2A, ACVR1B and SMAD3. Interacts with SMAD2 and SMAD3. Interacts with SMAD7. Interacts with FKBP1A. Interacts with IGSF1. Interacts with CRIPTO. Interacts with TDP2. Interacts with TSC22D1/TSC-22. Mg(2+) serves as cofactor. Mn(2+) is required as a cofactor. In terms of processing, autophosphorylated. Phosphorylated by activin receptor type-2 (ACVR2A or ACVR2B) in response to activin-binding at serine and threonine residues in the GS domain. Phosphorylation of ACVR1B by activin receptor type-2 regulates association with SMAD7. Post-translationally, ubiquitinated. Level of ubiquitination is regulated by the SMAD7-SMURF1 complex. Ubiquitinated. As to expression, expressed in many tissues, most strongly in kidney, pancreas, brain, lung, and liver.

The protein resides in the cell membrane. It carries out the reaction L-threonyl-[receptor-protein] + ATP = O-phospho-L-threonyl-[receptor-protein] + ADP + H(+). The enzyme catalyses L-seryl-[receptor-protein] + ATP = O-phospho-L-seryl-[receptor-protein] + ADP + H(+). Activin receptor type-2 (ACVR2A or ACVR2B) activates the type-1 receptor through phosphorylation of its regulatory GS domain. Its function is as follows. Transmembrane serine/threonine kinase activin type-1 receptor forming an activin receptor complex with activin receptor type-2 (ACVR2A or ACVR2B). Transduces the activin signal from the cell surface to the cytoplasm and is thus regulating a many physiological and pathological processes including neuronal differentiation and neuronal survival, hair follicle development and cycling, FSH production by the pituitary gland, wound healing, extracellular matrix production, immunosuppression and carcinogenesis. Activin is also thought to have a paracrine or autocrine role in follicular development in the ovary. Within the receptor complex, type-2 receptors (ACVR2A and/or ACVR2B) act as a primary activin receptors whereas the type-1 receptors like ACVR1B act as downstream transducers of activin signals. Activin binds to type-2 receptor at the plasma membrane and activates its serine-threonine kinase. The activated receptor type-2 then phosphorylates and activates the type-1 receptor such as ACVR1B. Once activated, the type-1 receptor binds and phosphorylates the SMAD proteins SMAD2 and SMAD3, on serine residues of the C-terminal tail. Soon after their association with the activin receptor and subsequent phosphorylation, SMAD2 and SMAD3 are released into the cytoplasm where they interact with the common partner SMAD4. This SMAD complex translocates into the nucleus where it mediates activin-induced transcription. Inhibitory SMAD7, which is recruited to ACVR1B through FKBP1A, can prevent the association of SMAD2 and SMAD3 with the activin receptor complex, thereby blocking the activin signal. Activin signal transduction is also antagonized by the binding to the receptor of inhibin-B via the IGSF1 inhibin coreceptor. ACVR1B also phosphorylates TDP2. The sequence is that of Activin receptor type-1B (ACVR1B) from Homo sapiens (Human).